The chain runs to 172 residues: Low molecular mass early light-inducible protein HV90, chloroplastic (172 aa).

A chloroplast-targeting transit peptide spans 1-38; the sequence is MATMMSMSSFAGAAVVPRSSASSFGARSLPALGRRALV. Helical transmembrane passes span 106 to 126 and 150 to 170; these read GQAW…VPLL and FAML…APFI.

This sequence belongs to the ELIP/psbS family.

The protein resides in the plastid. It localises to the chloroplast membrane. In terms of biological role, probably involved in the integration of pigments into the mature pigment-protein complexes. The sequence is that of Low molecular mass early light-inducible protein HV90, chloroplastic from Hordeum vulgare (Barley).